A 257-amino-acid chain; its full sequence is Ribonuclease PH (257 aa).

Phosphate contacts are provided by residues arginine 86 and 124–126 (GTR).

It belongs to the RNase PH family. As to quaternary structure, homohexameric ring arranged as a trimer of dimers.

It catalyses the reaction tRNA(n+1) + phosphate = tRNA(n) + a ribonucleoside 5'-diphosphate. Its function is as follows. Phosphorolytic 3'-5' exoribonuclease that plays an important role in tRNA 3'-end maturation. Removes nucleotide residues following the 3'-CCA terminus of tRNAs; can also add nucleotides to the ends of RNA molecules by using nucleoside diphosphates as substrates, but this may not be physiologically important. Probably plays a role in initiation of 16S rRNA degradation (leading to ribosome degradation) during starvation. This chain is Ribonuclease PH, found in Halalkalibacterium halodurans (strain ATCC BAA-125 / DSM 18197 / FERM 7344 / JCM 9153 / C-125) (Bacillus halodurans).